Here is a 1036-residue protein sequence, read N- to C-terminus: Pre-mRNA-processing factor 39-2 (1036 aa).

The interval 1-24 (MVTTEVRTAVSDKEPLQRSPELDS) is disordered. HAT repeat units follow at residues 62–94 (DDIE…HKIK), 96–128 (CTLE…FAVA), 131–166 (EDPH…YLLG), 168–201 (QQWS…IAAS), 278–310 (CFET…FGET), and 312–344 (GDFD…FVES). Disordered regions lie at residues 595-618 (GISS…YGTQ), 714-767 (PSGS…PVGT), and 995-1036 (KGDE…ISSI). Over residues 714–726 (PSGSQSPQSYQSQ) the composition is skewed to low complexity. Residues 740-755 (RDLNQMHRDSKPRSQE) show a composition bias toward basic and acidic residues. The segment covering 1002-1036 (SMPQGSTTNSDIQKSQESGAVNEANLSSDTSISSI) has biased composition (polar residues).

It belongs to the PRP39 family.

It is found in the nucleus. In terms of biological role, involved in pre-mRNA splicing. In Arabidopsis thaliana (Mouse-ear cress), this protein is Pre-mRNA-processing factor 39-2.